A 684-amino-acid chain; its full sequence is Glycine--tRNA ligase beta subunit (684 aa).

The protein belongs to the class-II aminoacyl-tRNA synthetase family. Tetramer of two alpha and two beta subunits.

The protein resides in the cytoplasm. It carries out the reaction tRNA(Gly) + glycine + ATP = glycyl-tRNA(Gly) + AMP + diphosphate. In Pseudomonas putida (strain ATCC 47054 / DSM 6125 / CFBP 8728 / NCIMB 11950 / KT2440), this protein is Glycine--tRNA ligase beta subunit.